The sequence spans 270 residues: 4-hydroxy-tetrahydrodipicolinate reductase (270 aa).

NAD(+) contacts are provided by residues 11–16 and E37; that span reads GASGRM. R38 lines the NADP(+) pocket. NAD(+) is bound by residues 101–103 and 125–128; these read GTT and SPNM. H158 serves as the catalytic Proton donor/acceptor. H159 provides a ligand contact to (S)-2,3,4,5-tetrahydrodipicolinate. The active-site Proton donor is K162. Position 168–169 (168–169) interacts with (S)-2,3,4,5-tetrahydrodipicolinate; the sequence is GT.

This sequence belongs to the DapB family.

The protein resides in the cytoplasm. It catalyses the reaction (S)-2,3,4,5-tetrahydrodipicolinate + NAD(+) + H2O = (2S,4S)-4-hydroxy-2,3,4,5-tetrahydrodipicolinate + NADH + H(+). It carries out the reaction (S)-2,3,4,5-tetrahydrodipicolinate + NADP(+) + H2O = (2S,4S)-4-hydroxy-2,3,4,5-tetrahydrodipicolinate + NADPH + H(+). It functions in the pathway amino-acid biosynthesis; L-lysine biosynthesis via DAP pathway; (S)-tetrahydrodipicolinate from L-aspartate: step 4/4. Catalyzes the conversion of 4-hydroxy-tetrahydrodipicolinate (HTPA) to tetrahydrodipicolinate. The polypeptide is 4-hydroxy-tetrahydrodipicolinate reductase (Shewanella denitrificans (strain OS217 / ATCC BAA-1090 / DSM 15013)).